Reading from the N-terminus, the 242-residue chain is MRIMQLDRHSLGFPSPEQALHDPNGLLAIGGDLQPARLLQAYQRGIFPWFSPGELILWWSPDPRAVLVPQALHISHSLRKALRRTTLRITLNQAFAAVIAGCAEQRAEGTWIGPSIQQAYCQLHQLGHAHSVEVWQEERLVGGLYGVAQGSLFCGESMFSRVSNASKMALWSFCSHFQRMGGQLIDCQVLNAHTASLGAHDIPRRRYLQHLLNCRSQTLAPRCWLPQSLTLPLPATATQIGE.

Belongs to the L/F-transferase family.

Its subcellular location is the cytoplasm. It catalyses the reaction N-terminal L-lysyl-[protein] + L-leucyl-tRNA(Leu) = N-terminal L-leucyl-L-lysyl-[protein] + tRNA(Leu) + H(+). The enzyme catalyses N-terminal L-arginyl-[protein] + L-leucyl-tRNA(Leu) = N-terminal L-leucyl-L-arginyl-[protein] + tRNA(Leu) + H(+). It carries out the reaction L-phenylalanyl-tRNA(Phe) + an N-terminal L-alpha-aminoacyl-[protein] = an N-terminal L-phenylalanyl-L-alpha-aminoacyl-[protein] + tRNA(Phe). Functionally, functions in the N-end rule pathway of protein degradation where it conjugates Leu, Phe and, less efficiently, Met from aminoacyl-tRNAs to the N-termini of proteins containing an N-terminal arginine or lysine. The polypeptide is Leucyl/phenylalanyl-tRNA--protein transferase (Edwardsiella ictaluri (strain 93-146)).